The chain runs to 509 residues: AAA ATPase forming ring-shaped complexes (509 aa).

Residues 11-50 (AHLQRTISNLSARNAKLAELLKASRDKLSILQDQLEDLAA) adopt a coiled-coil conformation. 236–241 (GCGKTL) serves as a coordination point for ATP.

It belongs to the AAA ATPase family. As to quaternary structure, homohexamer. Assembles into a hexameric ring structure.

In Corynebacterium diphtheriae (strain ATCC 700971 / NCTC 13129 / Biotype gravis), this protein is AAA ATPase forming ring-shaped complexes.